Reading from the N-terminus, the 129-residue chain is Phosphoribosyl-AMP cyclohydrolase (129 aa).

Position 86 (Asp86) interacts with Mg(2+). Cys87 contributes to the Zn(2+) binding site. Residues Asp88 and Asp90 each coordinate Mg(2+). Residues Cys104 and Cys111 each contribute to the Zn(2+) site.

The protein belongs to the PRA-CH family. In terms of assembly, homodimer. Mg(2+) serves as cofactor. It depends on Zn(2+) as a cofactor.

The protein localises to the cytoplasm. The enzyme catalyses 1-(5-phospho-beta-D-ribosyl)-5'-AMP + H2O = 1-(5-phospho-beta-D-ribosyl)-5-[(5-phospho-beta-D-ribosylamino)methylideneamino]imidazole-4-carboxamide. The protein operates within amino-acid biosynthesis; L-histidine biosynthesis; L-histidine from 5-phospho-alpha-D-ribose 1-diphosphate: step 3/9. Its function is as follows. Catalyzes the hydrolysis of the adenine ring of phosphoribosyl-AMP. In Ignicoccus hospitalis (strain KIN4/I / DSM 18386 / JCM 14125), this protein is Phosphoribosyl-AMP cyclohydrolase.